Consider the following 511-residue polypeptide: Early growth response protein 1 (511 aa).

Disordered regions lie at residues 133-169 (ASIPSSTSQATHPSSSSTSSIPSSSSSSTSSASLSCS) and 291-312 (PSRMRKYPNRPSKTPPHERPYA). The span at 137-169 (SSTSQATHPSSSSTSSIPSSSSSSTSSASLSCS) shows a compositional bias: low complexity. 3 C2H2-type zinc fingers span residues 311–335 (YACPVETCDRRFSRSDELTRHIRIH), 341–363 (FQCRICMRNFSRSDHLTTHIRTH), and 369–391 (FACEICGRKFARSDERKRHTKIH). The segment at 384–406 (RKRHTKIHMRQKDKKAEKGATAA) is disordered. Positions 386-396 (RHTKIHMRQKD) are enriched in basic residues.

This sequence belongs to the EGR C2H2-type zinc-finger protein family. Detected in muscle and brain.

It localises to the nucleus. Its subcellular location is the cytoplasm. In terms of biological role, transcriptional regulator. Recognizes and binds to the DNA sequence 5'-GCG(T/G)GGGCG-3'(EGR-site) in the promoter region of target genes. Binds double-stranded target DNA, irrespective of the cytosine methylation status. Regulates the transcription of numerous target genes, and thereby plays an important role in regulating the response to growth factors, DNA damage, and ischemia. Plays a role in the regulation of cell survival, proliferation and cell death. Mediates responses to ischemia and hypoxia; regulates the expression of proteins that are involved in inflammatory processes. Plays a role in regulating the expression of circadian clock genes. Plays a role in the organization of Muller glia cells in the inner and outer plexiform layers of the retina. This chain is Early growth response protein 1 (egr1), found in Danio rerio (Zebrafish).